We begin with the raw amino-acid sequence, 957 residues long: Glycine dehydrogenase (decarboxylating) (957 aa).

The residue at position 708 (lysine 708) is an N6-(pyridoxal phosphate)lysine.

It belongs to the GcvP family. The glycine cleavage system is composed of four proteins: P, T, L and H. It depends on pyridoxal 5'-phosphate as a cofactor.

It catalyses the reaction N(6)-[(R)-lipoyl]-L-lysyl-[glycine-cleavage complex H protein] + glycine + H(+) = N(6)-[(R)-S(8)-aminomethyldihydrolipoyl]-L-lysyl-[glycine-cleavage complex H protein] + CO2. Its function is as follows. The glycine cleavage system catalyzes the degradation of glycine. The P protein binds the alpha-amino group of glycine through its pyridoxal phosphate cofactor; CO(2) is released and the remaining methylamine moiety is then transferred to the lipoamide cofactor of the H protein. This chain is Glycine dehydrogenase (decarboxylating), found in Escherichia fergusonii (strain ATCC 35469 / DSM 13698 / CCUG 18766 / IAM 14443 / JCM 21226 / LMG 7866 / NBRC 102419 / NCTC 12128 / CDC 0568-73).